A 365-amino-acid polypeptide reads, in one-letter code: Peptide chain release factor 2 (365 aa).

Q252 bears the N5-methylglutamine mark.

Belongs to the prokaryotic/mitochondrial release factor family. In terms of processing, methylated by PrmC. Methylation increases the termination efficiency of RF2.

The protein resides in the cytoplasm. Peptide chain release factor 2 directs the termination of translation in response to the peptide chain termination codons UGA and UAA. The polypeptide is Peptide chain release factor 2 (Pseudoalteromonas translucida (strain TAC 125)).